We begin with the raw amino-acid sequence, 59 residues long: Large ribosomal subunit protein bL32 (59 aa).

The disordered stretch occupies residues 1–59; the sequence is MAVQQNKKSPSKRGMHRSHDALTAPALSVDSTTGEVHRPHHISPNGMYRGRKVVKVKGE. Residues 49 to 59 show a composition bias toward basic residues; it reads RGRKVVKVKGE.

Belongs to the bacterial ribosomal protein bL32 family.

The polypeptide is Large ribosomal subunit protein bL32 (rpmF) (Neisseria meningitidis serogroup A / serotype 4A (strain DSM 15465 / Z2491)).